Reading from the N-terminus, the 193-residue chain is Pre-histone-like nucleoprotein (193 aa).

The residue at position 2 (Ser-2) is an N-acetylserine; by host. Residues Ser-2–Gly-24 constitute a propeptide that is removed on maturation. Residue Lys-48 is modified to N6-acetyllysine; by host. Thr-55 is modified (phosphothreonine; by host). A Nuclear localization signal motif is present at residues Arg-183 to Thr-193.

Belongs to the adenoviridae histone-like nucleoprotein family. As to quaternary structure, interacts with the core-capsid bridging protein; this interaction bridges the virus core to the capsid. Interacts with host NPM1; this interaction might play a role in placing the pre-histone-like nucleoprotein on the viral DNA or regulating viral gene expression. Interacts with host HMGB1; this interaction inhibits host immune response. Cleaved near the N-terminus by the viral protease during virion maturation to form the mature protein.

Its subcellular location is the virion. The protein localises to the host nucleus. It localises to the host nucleolus. Functionally, plays a role in the inhibition of host immune response within the nucleus. Interacts with cellular nucleosomes and immobilizes the host immune danger signal HMGB1 on chromatin. In turn, prevents HMGB1 release out of the cell and thus decreases inflammation. Also plays a role in the wrapping and condensation of the viral DNA. May also promote viral genome import into the nucleus. This is Pre-histone-like nucleoprotein from Homo sapiens (Human).